Reading from the N-terminus, the 123-residue chain is MRKPQRGYARQDRVKEQIMRELAELVRTGLKDPRAGFITINEVEVTRDYSHATVFYTVLNQDTREITEEVLEHARGHLRSELSKRIKLFKIPELHFKYDESLERGMSLSALIDQVAAEKPVED.

Belongs to the RbfA family. As to quaternary structure, monomer. Binds 30S ribosomal subunits, but not 50S ribosomal subunits or 70S ribosomes.

The protein localises to the cytoplasm. One of several proteins that assist in the late maturation steps of the functional core of the 30S ribosomal subunit. Associates with free 30S ribosomal subunits (but not with 30S subunits that are part of 70S ribosomes or polysomes). Required for efficient processing of 16S rRNA. May interact with the 5'-terminal helix region of 16S rRNA. The sequence is that of Ribosome-binding factor A from Neisseria gonorrhoeae (strain NCCP11945).